Here is a 192-residue protein sequence, read N- to C-terminus: uncharacterized protein (192 aa).

One can recognise a Nudix hydrolase domain in the interval 29 to 160 (QRQAAVLIPV…PLDVYRRGNS (132 aa)). Positions 67–89 (GAVDSTDASLIAAALREAQEEVA) match the Nudix box motif. Mg(2+)-binding residues include Glu-83 and Glu-87.

This sequence belongs to the Nudix hydrolase family. PCD1 subfamily. It depends on Mn(2+) as a cofactor. The cofactor is Mg(2+).

Functionally, probably mediates the hydrolysis of some nucleoside diphosphate derivatives. This is an uncharacterized protein from Salmonella newport (strain SL254).